The chain runs to 442 residues: Cyclic AMP receptor-like protein B (442 aa).

The Extracellular segment spans residues 1–16; sequence MGGDIHLCSMILGKNH. Residues 17 to 37 traverse the membrane as a helical segment; it reads LIFLYFANLFGSTLSFLATII. The Cytoplasmic segment spans residues 38–219; it reads TIVFYLVKKY…PKKIDTLIFY (182 aa). The interval 83-166 is disordered; the sequence is YSSTPISIQN…LSSSDKNNTI (84 aa). Residues 91 to 103 show a composition bias toward low complexity; it reads QNNNNKNNNLPKQ. The span at 112–122 shows a compositional bias: polar residues; the sequence is INKNHNNYCNY. The span at 123 to 144 shows a compositional bias: low complexity; it reads STSATSSSSSSSSFSSTNSGSS. The span at 145-166 shows a compositional bias: polar residues; the sequence is YEYQQPQKNQQTLSSSDKNNTI. The chain crosses the membrane as a helical span at residues 220–240; it reads LSISDFIAVSGIIIEQLIIIF. At 241–255 the chain is on the extracellular side; that stretch reads NKEISKSIGFCIGER. A helical transmembrane segment spans residues 256 to 276; sequence VSIHFGLLATLFWSNCIAYYL. Residues 277-289 lie on the Cytoplasmic side of the membrane; sequence LRETYELKPYNIR. The chain crosses the membrane as a helical span at residues 290 to 310; that stretch reads FVYFHIVCWGMALIGVASLFF. The Extracellular segment spans residues 311 to 334; the sequence is SKIITVSNIDQGGSWCSVSSSYQL. Residues 335–355 traverse the membrane as a helical segment; sequence YFWVIPLFVSFTWNLICYCLI. Residues 356 to 382 are Cytoplasmic-facing; the sequence is YRKFNKIIGIYGIQSVQIKTIIIRKLS. A helical transmembrane segment spans residues 383-403; that stretch reads FYLLAFLITWVWDVINNSIFL. Topologically, residues 404-410 are extracellular; that stretch reads YEGKCPP. The helical transmembrane segment at 411-431 threads the bilayer; that stretch reads FALWILQEFFSSGYGFFNSLA. Residues 432-442 lie on the Cytoplasmic side of the membrane; that stretch reads YAVTTRFYSRK.

Belongs to the G-protein coupled receptor 5 family.

The protein resides in the membrane. Receptor for cAMP. This is Cyclic AMP receptor-like protein B (crlB) from Dictyostelium discoideum (Social amoeba).